We begin with the raw amino-acid sequence, 342 residues long: Ribosomal RNA small subunit methyltransferase C (342 aa).

Belongs to the methyltransferase superfamily. RsmC family. As to quaternary structure, monomer.

It is found in the cytoplasm. It catalyses the reaction guanosine(1207) in 16S rRNA + S-adenosyl-L-methionine = N(2)-methylguanosine(1207) in 16S rRNA + S-adenosyl-L-homocysteine + H(+). Its function is as follows. Specifically methylates the guanine in position 1207 of 16S rRNA in the 30S particle. The polypeptide is Ribosomal RNA small subunit methyltransferase C (Hahella chejuensis (strain KCTC 2396)).